The following is a 640-amino-acid chain: 1-deoxy-D-xylulose-5-phosphate synthase (640 aa).

Thiamine diphosphate contacts are provided by residues His-78 and 119 to 121; that span reads GHS. Residue Asp-151 participates in Mg(2+) binding. Thiamine diphosphate is bound by residues 152–153, Asn-180, Tyr-289, and Glu-371; that span reads GA. Asn-180 serves as a coordination point for Mg(2+).

It belongs to the transketolase family. DXPS subfamily. Homodimer. The cofactor is Mg(2+). Requires thiamine diphosphate as cofactor.

The enzyme catalyses D-glyceraldehyde 3-phosphate + pyruvate + H(+) = 1-deoxy-D-xylulose 5-phosphate + CO2. The protein operates within metabolic intermediate biosynthesis; 1-deoxy-D-xylulose 5-phosphate biosynthesis; 1-deoxy-D-xylulose 5-phosphate from D-glyceraldehyde 3-phosphate and pyruvate: step 1/1. Its function is as follows. Catalyzes the acyloin condensation reaction between C atoms 2 and 3 of pyruvate and glyceraldehyde 3-phosphate to yield 1-deoxy-D-xylulose-5-phosphate (DXP). The protein is 1-deoxy-D-xylulose-5-phosphate synthase of Bartonella quintana (strain Toulouse) (Rochalimaea quintana).